The following is a 283-amino-acid chain: NADPH-dependent 7-cyano-7-deazaguanine reductase (283 aa).

Substrate is bound at residue 90–92; sequence IES. Residue 92–93 participates in NADPH binding; that stretch reads SK. Cysteine 191 functions as the Thioimide intermediate in the catalytic mechanism. Aspartate 198 acts as the Proton donor in catalysis. Substrate is bound at residue 230–231; the sequence is HE. 259–260 contacts NADPH; sequence RG.

It belongs to the GTP cyclohydrolase I family. QueF type 2 subfamily. Homodimer.

It localises to the cytoplasm. It carries out the reaction 7-aminomethyl-7-carbaguanine + 2 NADP(+) = 7-cyano-7-deazaguanine + 2 NADPH + 3 H(+). The protein operates within tRNA modification; tRNA-queuosine biosynthesis. In terms of biological role, catalyzes the NADPH-dependent reduction of 7-cyano-7-deazaguanine (preQ0) to 7-aminomethyl-7-deazaguanine (preQ1). The polypeptide is NADPH-dependent 7-cyano-7-deazaguanine reductase (Tolumonas auensis (strain DSM 9187 / NBRC 110442 / TA 4)).